A 204-amino-acid polypeptide reads, in one-letter code: Small ribosomal subunit protein uS4 (204 aa).

The interval 25 to 45 (AVPSRRAYPPGQHGQARKKRS) is disordered. Residues 92–152 (MRLDNIIFRL…NKENSRRLAE (61 aa)) form the S4 RNA-binding domain.

Belongs to the universal ribosomal protein uS4 family. Part of the 30S ribosomal subunit. Contacts protein S5. The interaction surface between S4 and S5 is involved in control of translational fidelity.

In terms of biological role, one of the primary rRNA binding proteins, it binds directly to 16S rRNA where it nucleates assembly of the body of the 30S subunit. Functionally, with S5 and S12 plays an important role in translational accuracy. The protein is Small ribosomal subunit protein uS4 of Cyanothece sp. (strain PCC 7425 / ATCC 29141).